The chain runs to 148 residues: Arginine repressor (148 aa).

It belongs to the ArgR family.

Its subcellular location is the cytoplasm. Its pathway is amino-acid biosynthesis; L-arginine biosynthesis [regulation]. Regulates arginine biosynthesis genes. In Chlorobium limicola (strain DSM 245 / NBRC 103803 / 6330), this protein is Arginine repressor.